The primary structure comprises 184 residues: Ribosome-recycling factor (184 aa).

Belongs to the RRF family.

The protein resides in the cytoplasm. In terms of biological role, responsible for the release of ribosomes from messenger RNA at the termination of protein biosynthesis. May increase the efficiency of translation by recycling ribosomes from one round of translation to another. This Bifidobacterium adolescentis (strain ATCC 15703 / DSM 20083 / NCTC 11814 / E194a) protein is Ribosome-recycling factor.